The sequence spans 580 residues: Double-stranded RNA-binding protein Staufen homolog 1 (580 aa).

Residue serine 2 is modified to N-acetylserine. Over residues 34–44 (SIPSTTSSLPS) the composition is skewed to polar residues. The disordered stretch occupies residues 34–59 (SIPSTTSSLPSENAGRPIQNSALPSA). The DRBM 1 domain maps to 72–162 (TPTVELNALC…AAKALRTLQS (91 aa)). The residue at position 108 (arginine 108) is an Asymmetric dimethylarginine. Residue arginine 115 is modified to Asymmetric dimethylarginine; alternate. Arginine 115 is subject to Omega-N-methylarginine; alternate. Residues 158–189 (RTLQSEPLPERPEGRRPGEQVNGRESEEENLN) are disordered. Basic and acidic residues predominate over residues 165-182 (LPERPEGRRPGEQVNGRE). The residue at position 183 (serine 183) is a Phosphoserine. In terms of domain architecture, DRBM 2 spans 191–258 (SEISQVFEIA…AIAVLEELKK (68 aa)). Serine 285 is subject to Phosphoserine. Residues 293 to 361 (NPISRLAQIQ…AENMLEILGF (69 aa)) form the DRBM 3 domain. A disordered region spans residues 367–404 (QPTKPALKSEEKTPIKKPGDGRKVTFFEPGSGDENGTS). Over residues 373-391 (LKSEEKTPIKKPGDGRKVT) the composition is skewed to basic and acidic residues. Serine 397 carries the phosphoserine modification.

Binds tubulin. Binds with low affinity single-stranded RNA or DNA homopolymers. Interacts with CASC3 in an RNA-dependent manner. Identified in a mRNP complex, at least composed of DHX9, DDX3X, ELAVL1, HNRNPU, IGF2BP1, ILF3, PABPC1, PCBP2, PTBP2, STAU1, STAU2, SYNCRIP and YBX1. Interacts with the influenza virus nonstructural protein NS1.

It localises to the cytoplasm. Its subcellular location is the rough endoplasmic reticulum. Its function is as follows. Binds double-stranded RNA (regardless of the sequence) and tubulin. May play a role in specific positioning of mRNAs at given sites in the cell by cross-linking cytoskeletal and RNA components, and in stimulating their translation at the site. In Ailuropoda melanoleuca (Giant panda), this protein is Double-stranded RNA-binding protein Staufen homolog 1 (STAU1).